The primary structure comprises 313 residues: tRNA dimethylallyltransferase (313 aa).

10 to 17 is an ATP binding site; it reads GPTAVGKT. A substrate-binding site is contributed by 12–17; sequence TAVGKT. Residues 35–38 are interaction with substrate tRNA; sequence DSMQ.

This sequence belongs to the IPP transferase family. In terms of assembly, monomer. Mg(2+) is required as a cofactor.

It catalyses the reaction adenosine(37) in tRNA + dimethylallyl diphosphate = N(6)-dimethylallyladenosine(37) in tRNA + diphosphate. In terms of biological role, catalyzes the transfer of a dimethylallyl group onto the adenine at position 37 in tRNAs that read codons beginning with uridine, leading to the formation of N6-(dimethylallyl)adenosine (i(6)A). This chain is tRNA dimethylallyltransferase, found in Alkaliphilus oremlandii (strain OhILAs) (Clostridium oremlandii (strain OhILAs)).